The sequence spans 208 residues: Imidazole glycerol phosphate synthase subunit HisH (208 aa).

In terms of domain architecture, Glutamine amidotransferase type-1 spans 1–206 (MIVIIDYDTG…KEVTYSCKSS (206 aa)). The active-site Nucleophile is the Cys-79. Catalysis depends on residues His-181 and Glu-183.

Heterodimer of HisH and HisF.

The protein resides in the cytoplasm. It carries out the reaction 5-[(5-phospho-1-deoxy-D-ribulos-1-ylimino)methylamino]-1-(5-phospho-beta-D-ribosyl)imidazole-4-carboxamide + L-glutamine = D-erythro-1-(imidazol-4-yl)glycerol 3-phosphate + 5-amino-1-(5-phospho-beta-D-ribosyl)imidazole-4-carboxamide + L-glutamate + H(+). The catalysed reaction is L-glutamine + H2O = L-glutamate + NH4(+). The protein operates within amino-acid biosynthesis; L-histidine biosynthesis; L-histidine from 5-phospho-alpha-D-ribose 1-diphosphate: step 5/9. IGPS catalyzes the conversion of PRFAR and glutamine to IGP, AICAR and glutamate. The HisH subunit catalyzes the hydrolysis of glutamine to glutamate and ammonia as part of the synthesis of IGP and AICAR. The resulting ammonia molecule is channeled to the active site of HisF. This chain is Imidazole glycerol phosphate synthase subunit HisH, found in Listeria monocytogenes serotype 4a (strain HCC23).